We begin with the raw amino-acid sequence, 108 residues long: Curli assembly protein CsgC (108 aa).

Residues 1–8 (MHTLLLLA) form the signal peptide.

This sequence belongs to the CsgC/AgfC family.

Its subcellular location is the periplasm. Plays a role in the extracellular assembly of CsgA into thin aggregative fimbriae (Tafi) fibers. Assembly may also require CsgE. Tafi are thought to be assembled via an extracellular nucleation-precipitation (ENP) pathway, and possibly also via an intracellular non-CsgC-dependent pathway. This chain is Curli assembly protein CsgC, found in Salmonella arizonae (strain ATCC BAA-731 / CDC346-86 / RSK2980).